A 746-amino-acid polypeptide reads, in one-letter code: tRNA (cytosine(34)-C(5))-methyltransferase (746 aa).

The disordered stretch occupies residues 1-30 (MGRNQKQNFFAARKRQKRENGPKRTDRQAQ). Residues 18–30 (RENGPKRTDRQAQ) are compositionally biased toward basic and acidic residues. Residues 184–190 (CAAPGSK), aspartate 216, aspartate 243, and aspartate 270 contribute to the S-adenosyl-L-methionine site. The active-site Nucleophile is cysteine 323. Disordered stretches follow at residues 454-475 (QPAAEPQVDADGKPIEEKSVPW) and 701-746 (SAEA…VATS). Positions 463-472 (ADGKPIEEKS) are enriched in basic and acidic residues. Residues 704–714 (AEADSSGDGDA) show a composition bias toward acidic residues. Over residues 731–746 (AETTGTPMDTEVVATS) the composition is skewed to polar residues.

Belongs to the class I-like SAM-binding methyltransferase superfamily. RsmB/NOP family. TRM4 subfamily. Ubiquitously expressed during embryonic development. Some enrichment is observed in the proventriculus area of the foregut and in the hindgut.

The protein localises to the nucleus. It is found in the nucleolus. It carries out the reaction cytidine(34) in tRNA precursor + S-adenosyl-L-methionine = 5-methylcytidine(34) in tRNA precursor + S-adenosyl-L-homocysteine + H(+). In terms of biological role, RNA methyltransferase that methylates tRNAs. Methylates cytosine to 5-methylcytosine (m5C) at position 34 of intron-containing tRNA(Leu)(CAA) precursors. Required for short-term memory. In Drosophila melanogaster (Fruit fly), this protein is tRNA (cytosine(34)-C(5))-methyltransferase.